We begin with the raw amino-acid sequence, 505 residues long: Buccalin (505 aa).

The signal sequence occupies residues 1–25 (MAHHRGHRHILLYVSLALSLGLALA). Positions 26–62 (EDATDPSDDTGSFDDVEAVSEEADLDPYSMSQELNKR) are excised as a propeptide. Val-74 carries the post-translational modification Valine amide. Leucine amide is present on residues Leu-88 and Leu-102. Residue Gln-106 is modified to Pyrrolidone carboxylic acid. Ile-116 carries the isoleucine amide modification. Leu-129, Leu-143, Leu-157, Leu-171, Leu-185, Leu-199, Leu-213, Leu-227, Leu-241, Leu-254, Leu-267, Leu-281, Leu-294, Leu-307, Leu-321, and Leu-335 each carry leucine amide. Residue Glu-349 is modified to Glutamic acid 1-amide. A leucine amide mark is found at Leu-363, Leu-377, Leu-391, Leu-405, Leu-419, and Leu-433. Isoleucine amide occurs at positions 447 and 461. Gln-465 is modified (pyrrolidone carboxylic acid). Residues 472-505 (SGRLGKRSSSEQEEEDVRQVEKRSTTEEQSSKSL) form a disordered region. Residue Leu-475 is modified to Leucine amide. Basic and acidic residues predominate over residues 488 to 505 (VRQVEKRSTTEEQSSKSL). The propeptide occupies 495-505 (STTEEQSSKSL).

As to expression, cholinergic motor neuron B15 innervating buccal muscles in Aplysia.

The protein localises to the secreted. Modulatory neuropeptide, acting presynaptically on nerve terminals to inhibit acetylcholine release. The polypeptide is Buccalin (Aplysia californica (California sea hare)).